A 236-amino-acid chain; its full sequence is Orotidine 5'-phosphate decarboxylase (236 aa).

Residues Asp14, Lys36, 63–72 (DLKFHDIPNT), Thr122, Arg183, Gln192, Gly212, and Arg213 each bind substrate. Lys65 functions as the Proton donor in the catalytic mechanism.

This sequence belongs to the OMP decarboxylase family. Type 1 subfamily. Homodimer.

It catalyses the reaction orotidine 5'-phosphate + H(+) = UMP + CO2. It functions in the pathway pyrimidine metabolism; UMP biosynthesis via de novo pathway; UMP from orotate: step 2/2. In terms of biological role, catalyzes the decarboxylation of orotidine 5'-monophosphate (OMP) to uridine 5'-monophosphate (UMP). This Chromohalobacter salexigens (strain ATCC BAA-138 / DSM 3043 / CIP 106854 / NCIMB 13768 / 1H11) protein is Orotidine 5'-phosphate decarboxylase.